The chain runs to 202 residues: B-cell CLL/lymphoma 7 protein family member B (202 aa).

Residues 53-202 (DSKEKEKSKS…PAVPQTASES (150 aa)) are disordered. Residues 90-99 (ENSNQSSVSD) show a composition bias toward polar residues. Residues 107–123 (SSTNSSPSPQQSESLSP) are compositionally biased toward low complexity. Phosphoserine is present on residues S114, S118, S120, S122, S127, S148, and S152.

Belongs to the BCL7 family.

In terms of biological role, positive regulator of apoptosis. Plays a role in the Wnt signaling pathway, negatively regulating the expression of Wnt signaling components CTNNB1 and HMGA1. Involved in cell cycle progression, maintenance of the nuclear structure and stem cell differentiation. May play a role in lung tumor development or progression. The sequence is that of B-cell CLL/lymphoma 7 protein family member B (BCL7B) from Bos taurus (Bovine).